Consider the following 671-residue polypeptide: Synaptotagmin-like protein 4 (671 aa).

The RabBD domain occupies 4–122; it reads LLDLSFLSEE…KATGDWFYDQ (119 aa). The FYVE-type zinc-finger motif lies at 63 to 105; it reads CARCQESLGRLSPKTNTCRGCNHLVCRDCRIQESNGTWRCKVC. The segment at 199 to 243 is disordered; it reads SESLDSFTADSDSTSRRDSLDKSGLFPEWKKMSAPKSQVEKETQP. Serine 201, serine 204, serine 217, serine 221, serine 274, and serine 289 each carry phosphoserine. The region spanning 356–478 is the C2 1 domain; that stretch reads VTGRIAFSLK…KLDKKLDHCL (123 aa). Serine 488 carries the phosphoserine modification. The C2 2 domain maps to 507–633; the sequence is PASKTPVGGD…ISNGEVVDWM (127 aa).

Part of a ternary complex containing STX1A and RAB27A. Can bind both dominant negative and dominant active mutants of RAB27A. Binds STXBP1, RAB3A, RAB8A and RAB27B. Interacts with MYO5A.

The protein resides in the membrane. It localises to the cell membrane. The protein localises to the cytoplasmic vesicle. It is found in the secretory vesicle membrane. In terms of biological role, modulates exocytosis of dense-core granules and secretion of hormones in the pancreas and the pituitary. Interacts with vesicles containing negatively charged phospholipids in a Ca(2+)-independent manner. The protein is Synaptotagmin-like protein 4 (SYTL4) of Homo sapiens (Human).